The primary structure comprises 157 residues: Transcription elongation factor GreA (157 aa).

The protein belongs to the GreA/GreB family.

Its function is as follows. Necessary for efficient RNA polymerase transcription elongation past template-encoded arresting sites. The arresting sites in DNA have the property of trapping a certain fraction of elongating RNA polymerases that pass through, resulting in locked ternary complexes. Cleavage of the nascent transcript by cleavage factors such as GreA or GreB allows the resumption of elongation from the new 3'terminus. GreA releases sequences of 2 to 3 nucleotides. The sequence is that of Transcription elongation factor GreA from Caulobacter sp. (strain K31).